The sequence spans 347 residues: Heme A synthase (347 aa).

Helical transmembrane passes span 17-37 (LANW…VGGI), 106-126 (GIGA…AIPA), 132-152 (MIGI…MVYS), 165-185 (LATH…TVLD), 202-222 (ALAI…AFVA), 260-280 (IVVQ…ALAV), 295-315 (AVAT…LTGV), and 317-337 (IAVA…LLWA). H266 contacts heme. Position 323 (H323) interacts with heme.

This sequence belongs to the COX15/CtaA family. Type 2 subfamily. As to quaternary structure, interacts with CtaB. Heme b serves as cofactor.

The protein localises to the cell membrane. It catalyses the reaction Fe(II)-heme o + 2 A + H2O = Fe(II)-heme a + 2 AH2. It participates in porphyrin-containing compound metabolism; heme A biosynthesis; heme A from heme O: step 1/1. Its function is as follows. Catalyzes the conversion of heme O to heme A by two successive hydroxylations of the methyl group at C8. The first hydroxylation forms heme I, the second hydroxylation results in an unstable dihydroxymethyl group, which spontaneously dehydrates, resulting in the formyl group of heme A. This Rhizorhabdus wittichii (strain DSM 6014 / CCUG 31198 / JCM 15750 / NBRC 105917 / EY 4224 / RW1) (Sphingomonas wittichii) protein is Heme A synthase.